Here is a 520-residue protein sequence, read N- to C-terminus: ATP-dependent RNA helicase CshA (520 aa).

The Q motif motif lies at 2-30; it reads TKFSEFGLDEKIVKSVNRMGFEEATPIQE. Residues 33 to 203 enclose the Helicase ATP-binding domain; sequence IPLGLEGKDL…ERFMHSPELI (171 aa). Residue 46-53 participates in ATP binding; it reads AQTGTGKT. The DEAD box motif lies at 151–154; the sequence is DEAD. The Helicase C-terminal domain maps to 214 to 374; it reads LIEQFFVKVH…PLQAPTWDEA (161 aa). The span at 428–439 shows a compositional bias: basic and acidic residues; the sequence is KTPVHITEERPL. Residues 428–520 form a disordered region; the sequence is KTPVHITEER…NKGNYSQKSK (93 aa). Composition is skewed to gly residues over residues 442–468 and 482–496; these read RGGGGYKGKNGKGGKGGGYRGGSGKGG and SGGGSGGGSGSGGGG.

The protein belongs to the DEAD box helicase family. CshA subfamily. In terms of assembly, oligomerizes, may be a member of the RNA degradosome.

It localises to the cytoplasm. The enzyme catalyses ATP + H2O = ADP + phosphate + H(+). Its function is as follows. DEAD-box RNA helicase possibly involved in RNA degradation. Unwinds dsRNA in both 5'- and 3'-directions, has RNA-dependent ATPase activity. Involved in cold tolerance, motility and alcohol tolerance. The chain is ATP-dependent RNA helicase CshA from Listeria monocytogenes serovar 1/2a (strain ATCC BAA-679 / EGD-e).